The chain runs to 660 residues: Acetyl-coenzyme A synthetase (660 aa).

CoA contacts are provided by residues 197–200 (RGGK) and Thr317. ATP-binding positions include 397-399 (GEP), 421-426 (DTFWQT), Asp512, and Arg528. Ser536 serves as a coordination point for CoA. Arg539 is an ATP binding site. The Mg(2+) site is built by Val550 and Val555. N6-acetyllysine is present on Lys625.

This sequence belongs to the ATP-dependent AMP-binding enzyme family. Mg(2+) serves as cofactor. Acetylated. Deacetylation by the SIR2-homolog deacetylase activates the enzyme.

The enzyme catalyses acetate + ATP + CoA = acetyl-CoA + AMP + diphosphate. Catalyzes the conversion of acetate into acetyl-CoA (AcCoA), an essential intermediate at the junction of anabolic and catabolic pathways. AcsA undergoes a two-step reaction. In the first half reaction, AcsA combines acetate with ATP to form acetyl-adenylate (AcAMP) intermediate. In the second half reaction, it can then transfer the acetyl group from AcAMP to the sulfhydryl group of CoA, forming the product AcCoA. The polypeptide is Acetyl-coenzyme A synthetase (Cupriavidus taiwanensis (strain DSM 17343 / BCRC 17206 / CCUG 44338 / CIP 107171 / LMG 19424 / R1) (Ralstonia taiwanensis (strain LMG 19424))).